A 282-amino-acid chain; its full sequence is Glutamate--LysW ligase ArgX (282 aa).

ATP-binding positions include Lys87, Lys127, 131 to 137, and 167 to 178; these read GSWGRLV and QEYINYKSRDIR. The 187-residue stretch at 91-277 folds into the ATP-grasp domain; sequence YSKLYREGIP…VAEELVSYVK (187 aa). Substrate is bound at residue Arg192. Asn202 is an ATP binding site. 203-204 is a binding site for substrate; it reads IA. Mg(2+)-binding residues include Asp237, Glu250, and Asn252. A substrate-binding site is contributed by 256-260; that stretch reads EFKGF. The short motif at 259-260 is the GF motif that is essential for ArgX substrate specificity element; sequence GF.

This sequence belongs to the RimK family. LysX subfamily. As to quaternary structure, homotetramer. Interacts with LysW. It depends on Mg(2+) as a cofactor.

It catalyses the reaction [amino-group carrier protein]-C-terminal-L-glutamate + L-glutamate + ATP = [amino-group carrier protein]-C-terminal-gamma-(L-glutamyl)-L-glutamate + ADP + phosphate + H(+). It functions in the pathway amino-acid biosynthesis; L-arginine biosynthesis. Functionally, catalyzes the ATP-dependent formation of a covalent bond between the amino group of glutamate and the gamma-carboxyl group of the C-terminal glutamate residue in LysW. This Sulfolobus acidocaldarius (strain ATCC 33909 / DSM 639 / JCM 8929 / NBRC 15157 / NCIMB 11770) protein is Glutamate--LysW ligase ArgX.